The chain runs to 89 residues: Small ribosomal subunit protein uS15 (89 aa).

This sequence belongs to the universal ribosomal protein uS15 family. In terms of assembly, part of the 30S ribosomal subunit. Forms a bridge to the 50S subunit in the 70S ribosome, contacting the 23S rRNA.

In terms of biological role, one of the primary rRNA binding proteins, it binds directly to 16S rRNA where it helps nucleate assembly of the platform of the 30S subunit by binding and bridging several RNA helices of the 16S rRNA. Forms an intersubunit bridge (bridge B4) with the 23S rRNA of the 50S subunit in the ribosome. In Zymomonas mobilis subsp. mobilis (strain ATCC 31821 / ZM4 / CP4), this protein is Small ribosomal subunit protein uS15.